We begin with the raw amino-acid sequence, 189 residues long: Pyridoxal 5'-phosphate synthase subunit PdxT (189 aa).

L-glutamine is bound at residue 50–52 (GES). The active-site Nucleophile is the C80. L-glutamine-binding positions include R107 and 134–135 (IR). Catalysis depends on charge relay system residues H169 and E171.

This sequence belongs to the glutaminase PdxT/SNO family. In the presence of PdxS, forms a dodecamer of heterodimers. Only shows activity in the heterodimer.

It carries out the reaction aldehydo-D-ribose 5-phosphate + D-glyceraldehyde 3-phosphate + L-glutamine = pyridoxal 5'-phosphate + L-glutamate + phosphate + 3 H2O + H(+). It catalyses the reaction L-glutamine + H2O = L-glutamate + NH4(+). It participates in cofactor biosynthesis; pyridoxal 5'-phosphate biosynthesis. Catalyzes the hydrolysis of glutamine to glutamate and ammonia as part of the biosynthesis of pyridoxal 5'-phosphate. The resulting ammonia molecule is channeled to the active site of PdxS. This chain is Pyridoxal 5'-phosphate synthase subunit PdxT, found in Picrophilus torridus (strain ATCC 700027 / DSM 9790 / JCM 10055 / NBRC 100828 / KAW 2/3).